We begin with the raw amino-acid sequence, 484 residues long: NADH-quinone oxidoreductase subunit N (484 aa).

A run of 13 helical transmembrane segments spans residues 10–30 (LALPEIWLLAATCGVLVVDLF), 40–60 (FYLTQGALLVTAVLALSTQWG), 74–94 (SLGAVVKASVALLSVLALAYT), 108–128 (FYLLALFANLGMLVIASGGSL), 129–149 (LSLYLGLELLSLALYALVAYH), 163–183 (FVLGSLASGILLYGMSMVYGA), 203–223 (LMLLFGVVFMLVGVAFKLGAA), 237–257 (PTPVTLFLSTAPKVAAVALFM), 272–292 (EPMLMILAVASLLVGNLIAIV), 299–319 (MLAYSAIAHAGFIMVGFTAGT), 327–347 (LFYTIAYSIMAAGAFGMITVL), 370–390 (YAGVLLLVLVSMTGIPGTVGF), and 404–424 (GHIPLAIFAVVAAVVGAFYYL).

It belongs to the complex I subunit 2 family. In terms of assembly, NDH-1 is composed of 14 different subunits. Subunits NuoA, H, J, K, L, M, N constitute the membrane sector of the complex.

Its subcellular location is the cell inner membrane. The catalysed reaction is a quinone + NADH + 5 H(+)(in) = a quinol + NAD(+) + 4 H(+)(out). NDH-1 shuttles electrons from NADH, via FMN and iron-sulfur (Fe-S) centers, to quinones in the respiratory chain. The immediate electron acceptor for the enzyme in this species is believed to be ubiquinone. Couples the redox reaction to proton translocation (for every two electrons transferred, four hydrogen ions are translocated across the cytoplasmic membrane), and thus conserves the redox energy in a proton gradient. This chain is NADH-quinone oxidoreductase subunit N, found in Halorhodospira halophila (strain DSM 244 / SL1) (Ectothiorhodospira halophila (strain DSM 244 / SL1)).